A 456-amino-acid polypeptide reads, in one-letter code: Shufflon protein D' (456 aa).

Positions 1-361 are constant region; that stretch reads MKKYDRGWAS…TGAILSCQSG (361 aa). Residues 362-456 form a variable region region; it reads TWRKSNSGST…KCSYVVACQN (95 aa).

The sequence is that of Shufflon protein D' from Escherichia coli.